Reading from the N-terminus, the 669-residue chain is MDLRTAVYNAARDGKLQLLQKLLSGRSREELDELTGEVAGGGTPLLIAARYGHLDVVEYLVDRCGASVEAGGSVHFDGETIEGAPPLWAASAAGHLDVVRSLLRRGASVNRTTRTNSTPLRAACFDGHLEVVRYLVGEHQADLEVANRHGHTCLMISCYKGHREIARYLLEQGAQVNRRSAKGNTALHDCAESGSLEILQLLLGCKARMERDGYGMTPLLAASVTGHTNIVEYLIQEQPGQEQVAGGEAQPGLPQEDPSTSQGCAQPQGAPCCSSSPEEPLNGESYESCCPTSREAAVEALELLGATYVDKKRDLLGALKHWRRAMELRHQGGEYLPKPEPPQLVLAYDYSREVNTTEELEALITDPDEMRMQALLIRERILGPSHPDTSYYIRYRGAVYADSGNFERCIRLWKYALDMQQSNLEPLSPMTASSFLSFAELFSYVLQDRAAKGSLGTQIGFADLMGVLTKGVREVERALQLPREPGDSAQFTKALAIILHLLYLLEKVECTPSQEHLKHQTVYRLLKCAPRGKNGFTPLHMAVDKDTTNVGRYPVGRFPSLHVVKVLLDCGADPDSRDFDNNTPLHIAAQNNCPAIMNALIEAGAHMDATNAFKKTAYELLDEKLLARGTMQPFNYVTLQCLAARALDKNKIPYKGFIPEDLEAFIELH.

7 ANK repeats span residues aspartate 2–leucine 31, glycine 40–alanine 70, glutamate 82–arginine 111, threonine 115–valine 145, histidine 149–arginine 178, lysine 182–arginine 211, and tyrosine 214–glutamine 243. Serine 108 carries the post-translational modification Phosphoserine. The segment at glycine 240 to glutamate 278 is disordered. 2 TPR repeats span residues valine 298–glycine 332 and serine 390–asparagine 423. 2 ANK repeats span residues asparagine 534–serine 576 and aspartate 580–alanine 609.

The protein belongs to the fem-1 family. In terms of assembly, component of a CRL2 E3 ubiquitin-protein ligase complex, also named ECS (Elongin BC-CUL2/5-SOCS-box protein) complex, composed of CUL2, Elongin BC (ELOB and ELOC), RBX1 and substrate-specific adapter FEM1A. Interacts with PTGER4. Interacts with NFKB1; the interaction is direct. Phosphorylated; highly phosphorylated in myoblasts and myotubes. Phosphorylation at Ser-108 promotes PGE2-EP4-mediated inhibition of inflammation. Dephosphorylated by protein phosphatase 2A (PP2A). As to expression, present in macrophages derived from peripheral blood monocytes. Also present in atheromata (at protein level).

Its subcellular location is the mitochondrion. The protein localises to the cytoplasm. Its pathway is protein modification; protein ubiquitination. Functionally, substrate-recognition component of a Cul2-RING (CRL2) E3 ubiquitin-protein ligase complex of the DesCEND (destruction via C-end degrons) pathway, which recognizes a C-degron located at the extreme C terminus of target proteins, leading to their ubiquitination and degradation. The C-degron recognized by the DesCEND pathway is usually a motif of less than ten residues and can be present in full-length proteins, truncated proteins or proteolytically cleaved forms. The CRL2(FEM1A) complex specifically recognizes proteins with an arginine at the C-terminus: recognizes and binds proteins ending with -Lys/Arg-Xaa-Arg and -Lys/Arg-Xaa-Xaa-Arg C-degrons, such as SIL1 or OR51B2, leading to their ubiquitination and degradation. Promotes ubiquitination and degradation of SLBP. Involved in PGE2-EP4-mediated inhibition of inflammation of macrophages via interaction with NFKB1 and PTGER4. Promotes inflammation in brain microglia through MAP2K4/MKK4-mediated signaling. This chain is Protein fem-1 homolog A, found in Homo sapiens (Human).